We begin with the raw amino-acid sequence, 757 residues long: POU domain, class 2, transcription factor 1 (757 aa).

Disordered stretches follow at residues 1–43, 271–295, 375–398, and 532–574; these read MKLH…QTNG, AATP…SLEE, SLSN…RRKK, and VSSV…TSPL. Polar residues-rich tracts occupy residues 19 to 43 and 275 to 285; these read RMNN…QTNG and VQQLPQSQTTP. Residues 294–368 form the POU-specific domain; the sequence is EEPSDLEELE…LLEKWLNDAE (75 aa). Positions 395–454 form a DNA-binding region, homeobox; it reads RRKKRTSIETNIRVALEKSFLENQKPTSEEITMIADQLNMEKEVIRVWFCNRRQKEKRIN.

Belongs to the POU transcription factor family. Class-2 subfamily.

It is found in the cytoplasm. It localises to the nucleus. Transcription factor that binds to the octamer motif (5'-ATTTGCAT-3') and activates the promoters of the genes for some small nuclear RNAs (snRNA) and histone H2B. Acts downstream of Notch signaling during radial glia formation. Regulates apoptosis, possibly via an FGF-signaling pathway. The polypeptide is POU domain, class 2, transcription factor 1 (Xenopus tropicalis (Western clawed frog)).